Consider the following 172-residue polypeptide: NAD(P)H-quinone oxidoreductase subunit J (172 aa).

Belongs to the complex I 30 kDa subunit family. In terms of assembly, NDH-1 can be composed of about 15 different subunits; different subcomplexes with different compositions have been identified which probably have different functions.

It is found in the cellular thylakoid membrane. The enzyme catalyses a plastoquinone + NADH + (n+1) H(+)(in) = a plastoquinol + NAD(+) + n H(+)(out). It catalyses the reaction a plastoquinone + NADPH + (n+1) H(+)(in) = a plastoquinol + NADP(+) + n H(+)(out). In terms of biological role, NDH-1 shuttles electrons from an unknown electron donor, via FMN and iron-sulfur (Fe-S) centers, to quinones in the respiratory and/or the photosynthetic chain. The immediate electron acceptor for the enzyme in this species is believed to be plastoquinone. Couples the redox reaction to proton translocation, and thus conserves the redox energy in a proton gradient. Cyanobacterial NDH-1 also plays a role in inorganic carbon-concentration. The chain is NAD(P)H-quinone oxidoreductase subunit J from Synechococcus elongatus (strain ATCC 33912 / PCC 7942 / FACHB-805) (Anacystis nidulans R2).